We begin with the raw amino-acid sequence, 103 residues long: Pyrimidine/purine nucleoside phosphorylase (103 aa).

Belongs to the nucleoside phosphorylase PpnP family.

The catalysed reaction is a purine D-ribonucleoside + phosphate = a purine nucleobase + alpha-D-ribose 1-phosphate. It carries out the reaction adenosine + phosphate = alpha-D-ribose 1-phosphate + adenine. It catalyses the reaction cytidine + phosphate = cytosine + alpha-D-ribose 1-phosphate. The enzyme catalyses guanosine + phosphate = alpha-D-ribose 1-phosphate + guanine. The catalysed reaction is inosine + phosphate = alpha-D-ribose 1-phosphate + hypoxanthine. It carries out the reaction thymidine + phosphate = 2-deoxy-alpha-D-ribose 1-phosphate + thymine. It catalyses the reaction uridine + phosphate = alpha-D-ribose 1-phosphate + uracil. The enzyme catalyses xanthosine + phosphate = alpha-D-ribose 1-phosphate + xanthine. In terms of biological role, catalyzes the phosphorolysis of diverse nucleosides, yielding D-ribose 1-phosphate and the respective free bases. Can use uridine, adenosine, guanosine, cytidine, thymidine, inosine and xanthosine as substrates. Also catalyzes the reverse reactions. In Geobacter sp. (strain M21), this protein is Pyrimidine/purine nucleoside phosphorylase.